The following is a 346-amino-acid chain: 3-keto-steroid reductase (346 aa).

Residues leucine 16, threonine 39, and arginine 45 each coordinate NADP(+). Residues serine 178 and tyrosine 201 each act as proton donor in the active site. NADP(+) contacts are provided by tyrosine 201, lysine 205, and serine 236. Lysine 205 acts as the Lowers pKa of active site Tyr in catalysis.

It belongs to the short-chain dehydrogenases/reductases (SDR) family. ERG27 subfamily.

It catalyses the reaction a 3beta-hydroxysteroid + NADP(+) = a 3-oxosteroid + NADPH + H(+). The protein operates within steroid biosynthesis; zymosterol biosynthesis; zymosterol from lanosterol: step 5/6. In terms of biological role, responsible for the reduction of the keto group on the C-3 of sterols. In Kluyveromyces lactis (strain ATCC 8585 / CBS 2359 / DSM 70799 / NBRC 1267 / NRRL Y-1140 / WM37) (Yeast), this protein is 3-keto-steroid reductase (ERG27).